Here is a 104-residue protein sequence, read N- to C-terminus: Nucleoid-associated protein Bsph_0039 (104 aa).

The segment covering 1 to 12 (MRGMGNMQGMMK) has biased composition (low complexity). The disordered stretch occupies residues 1–22 (MRGMGNMQGMMKKMQKMQKEMM).

This sequence belongs to the YbaB/EbfC family. In terms of assembly, homodimer.

The protein localises to the cytoplasm. It localises to the nucleoid. Binds to DNA and alters its conformation. May be involved in regulation of gene expression, nucleoid organization and DNA protection. In Lysinibacillus sphaericus (strain C3-41), this protein is Nucleoid-associated protein Bsph_0039.